Here is a 492-residue protein sequence, read N- to C-terminus: N-succinylglutamate 5-semialdehyde dehydrogenase (492 aa).

NAD(+) is bound at residue 220–225; sequence GSANTG. Residues Glu-243 and Cys-277 contribute to the active site.

Belongs to the aldehyde dehydrogenase family. AstD subfamily.

The enzyme catalyses N-succinyl-L-glutamate 5-semialdehyde + NAD(+) + H2O = N-succinyl-L-glutamate + NADH + 2 H(+). It participates in amino-acid degradation; L-arginine degradation via AST pathway; L-glutamate and succinate from L-arginine: step 4/5. In terms of biological role, catalyzes the NAD-dependent reduction of succinylglutamate semialdehyde into succinylglutamate. This is N-succinylglutamate 5-semialdehyde dehydrogenase from Escherichia coli (strain UTI89 / UPEC).